Reading from the N-terminus, the 632-residue chain is Extracellular metalloproteinase 2 (632 aa).

The signal sequence occupies residues 1–19 (MHGLLLAGLAVALPLGVAG). Positions 20 to 244 (HPARPQTALS…VHNVVDYVAS (225 aa)) are excised as a propeptide. An N-linked (GlcNAc...) asparagine glycan is attached at asparagine 270. A compositionally biased stretch (polar residues) spans 294-310 (NNVAAQDNPSGGSQWEN). The interval 294–313 (NNVAAQDNPSGGSQWENNYR) is disordered. Histidine 429 lines the Zn(2+) pocket. Glutamate 430 is a catalytic residue. Residue histidine 433 coordinates Zn(2+).

This sequence belongs to the peptidase M36 family. Requires Zn(2+) as cofactor.

The protein localises to the secreted. Its function is as follows. Secreted metalloproteinase probably acting as a virulence factor. This Arthroderma otae (Microsporum canis) protein is Extracellular metalloproteinase 2 (MEP2).